Reading from the N-terminus, the 231-residue chain is 2,3-bisphosphoglycerate-dependent phosphoglycerate mutase (231 aa).

Residues 10-17 (RHGQSEWN), 23-24 (TG), Arg-62, 89-92 (ERHY), Lys-100, 116-117 (RR), and 185-186 (GN) each bind substrate. Catalysis depends on His-11, which acts as the Tele-phosphohistidine intermediate. Glu-89 (proton donor/acceptor) is an active-site residue.

This sequence belongs to the phosphoglycerate mutase family. BPG-dependent PGAM subfamily. As to quaternary structure, homodimer.

It catalyses the reaction (2R)-2-phosphoglycerate = (2R)-3-phosphoglycerate. The protein operates within carbohydrate degradation; glycolysis; pyruvate from D-glyceraldehyde 3-phosphate: step 3/5. Catalyzes the interconversion of 2-phosphoglycerate and 3-phosphoglycerate. The sequence is that of 2,3-bisphosphoglycerate-dependent phosphoglycerate mutase from Buchnera aphidicola subsp. Acyrthosiphon pisum (strain 5A).